The sequence spans 134 residues: Small ribosomal subunit protein uS8c (134 aa).

It belongs to the universal ribosomal protein uS8 family. As to quaternary structure, part of the 30S ribosomal subunit.

Its subcellular location is the plastid. Functionally, one of the primary rRNA binding proteins, it binds directly to 16S rRNA central domain where it helps coordinate assembly of the platform of the 30S subunit. This chain is Small ribosomal subunit protein uS8c (rps8), found in Cuscuta obtusiflora (Peruvian dodder).